Consider the following 344-residue polypeptide: Phosphoribosylformylglycinamidine cyclo-ligase (344 aa).

The protein belongs to the AIR synthase family.

It localises to the cytoplasm. The catalysed reaction is 2-formamido-N(1)-(5-O-phospho-beta-D-ribosyl)acetamidine + ATP = 5-amino-1-(5-phospho-beta-D-ribosyl)imidazole + ADP + phosphate + H(+). Its pathway is purine metabolism; IMP biosynthesis via de novo pathway; 5-amino-1-(5-phospho-D-ribosyl)imidazole from N(2)-formyl-N(1)-(5-phospho-D-ribosyl)glycinamide: step 2/2. The protein is Phosphoribosylformylglycinamidine cyclo-ligase of Neisseria meningitidis serogroup C / serotype 2a (strain ATCC 700532 / DSM 15464 / FAM18).